We begin with the raw amino-acid sequence, 638 residues long: 1-deoxy-D-xylulose-5-phosphate synthase (638 aa).

Thiamine diphosphate-binding positions include histidine 79 and 120 to 122 (GHS). Mg(2+) is bound at residue aspartate 151. Residues 152-153 (GA), asparagine 182, tyrosine 291, and glutamate 373 each bind thiamine diphosphate. Asparagine 182 serves as a coordination point for Mg(2+).

It belongs to the transketolase family. DXPS subfamily. Homodimer. Mg(2+) is required as a cofactor. Requires thiamine diphosphate as cofactor.

It catalyses the reaction D-glyceraldehyde 3-phosphate + pyruvate + H(+) = 1-deoxy-D-xylulose 5-phosphate + CO2. It functions in the pathway metabolic intermediate biosynthesis; 1-deoxy-D-xylulose 5-phosphate biosynthesis; 1-deoxy-D-xylulose 5-phosphate from D-glyceraldehyde 3-phosphate and pyruvate: step 1/1. Functionally, catalyzes the acyloin condensation reaction between C atoms 2 and 3 of pyruvate and glyceraldehyde 3-phosphate to yield 1-deoxy-D-xylulose-5-phosphate (DXP). The protein is 1-deoxy-D-xylulose-5-phosphate synthase of Xanthomonas euvesicatoria pv. vesicatoria (strain 85-10) (Xanthomonas campestris pv. vesicatoria).